The chain runs to 303 residues: Polyisoprenyl-teichoic acid--peptidoglycan teichoic acid transferase TagU (303 aa).

The Cytoplasmic segment spans residues 1 to 4; that stretch reads MKKK. A helical; Signal-anchor for type II membrane protein transmembrane segment spans residues 5-25; sequence ILFWVLGILGVLIIGGGIYAY. Residues 26 to 303 are Extracellular-facing; the sequence is NVYSSVSNTL…KLRTHLEVTK (278 aa).

Belongs to the LytR/CpsA/Psr (LCP) family.

The protein resides in the cell membrane. Its pathway is cell wall biogenesis. May catalyze the final step in cell wall teichoic acid biosynthesis, the transfer of the anionic cell wall polymers (APs) from their lipid-linked precursor to the cell wall peptidoglycan (PG). This chain is Polyisoprenyl-teichoic acid--peptidoglycan teichoic acid transferase TagU, found in Bacillus anthracis (strain A0248).